Here is a 1176-residue protein sequence, read N- to C-terminus: DNA-directed RNA polymerase subunit beta (1176 aa).

The span at 13-30 (TDASLHQGRPQSSSNSSV) shows a compositional bias: polar residues. The disordered stretch occupies residues 13 to 35 (TDASLHQGRPQSSSNSSVPGAPN).

The protein belongs to the RNA polymerase beta chain family. As to quaternary structure, the RNAP catalytic core consists of 2 alpha, 1 beta, 1 beta' and 1 omega subunit. When a sigma factor is associated with the core the holoenzyme is formed, which can initiate transcription.

It carries out the reaction RNA(n) + a ribonucleoside 5'-triphosphate = RNA(n+1) + diphosphate. In terms of biological role, DNA-dependent RNA polymerase catalyzes the transcription of DNA into RNA using the four ribonucleoside triphosphates as substrates. This Mycobacterium marinum (strain ATCC BAA-535 / M) protein is DNA-directed RNA polymerase subunit beta.